We begin with the raw amino-acid sequence, 440 residues long: Phosphoglycerate kinase, glycosomal (440 aa).

Positions 23, 24, 25, 26, 39, 61, 62, 64, 65, 135, 171, and 172 each coordinate (2R)-3-phosphoglycerate. Gly-217 provides a ligand contact to CDP. Ala-218 is a binding site for ADP. Residues Ala-218 and Lys-219 each coordinate AMP. Ala-218 serves as a coordination point for ATP. Ala-218 lines the Mg(2+) pocket. Lys-219 lines the (2R)-3-phosphoglycerate pocket. Residue Asp-222 coordinates CDP. Asp-222 lines the Mg(2+) pocket. Positions 223 and 241 each coordinate ADP. Lys-223 contributes to the AMP binding site. Gly-241 is a binding site for CDP. AMP is bound by residues Ala-242 and Ala-314. ATP-binding residues include Ala-242 and Ala-314. 2 residues coordinate ADP: Ala-314 and Asn-338. 2 residues coordinate CDP: Gly-339 and Phe-344. ADP is bound by residues Phe-344, Glu-345, Asp-377, and Ser-378. AMP is bound at residue Glu-345. The ATP site is built by Asp-377 and Ser-378. Mg(2+) is bound at residue Asp-377.

This sequence belongs to the phosphoglycerate kinase family. As to quaternary structure, monomer. Mg(2+) serves as cofactor.

The protein resides in the glycosome. The catalysed reaction is (2R)-3-phosphoglycerate + ATP = (2R)-3-phospho-glyceroyl phosphate + ADP. The protein operates within carbohydrate degradation; glycolysis; pyruvate from D-glyceraldehyde 3-phosphate: step 2/5. The protein is Phosphoglycerate kinase, glycosomal of Trypanosoma brucei brucei.